A 1091-amino-acid chain; its full sequence is AP-3 complex subunit beta-1 (1091 aa).

2 disordered regions span residues 1–32 and 267–290; these read MSGN…SPSG and EDNE…KKKP. A compositionally biased stretch (basic and acidic residues) spans 267–288; the sequence is EDNEKNFYESDDEQKEKTDQKK. 2 positions are modified to phosphoserine: serine 276 and serine 609. The segment at 664–807 is disordered; sequence AGKAKKENPA…EKEKKTKEDR (144 aa). Over residues 667–678 the composition is skewed to basic and acidic residues; it reads AKKENPARKFYS. Acidic residues-rich tracts occupy residues 679-695 and 703-718; these read DSEE…DSES and EQDE…SEDS. The segment covering 719-736 has biased composition (basic and acidic residues); it reads SSEHRSDSESVSEVGDKR. Phosphoserine is present on residues serine 748 and serine 750. Residues 763–775 are compositionally biased toward low complexity; it reads SDSSSTDSSSVEE. A compositionally biased stretch (acidic residues) spans 776–789; sequence SSSDSESESESESE. The span at 790 to 807 shows a compositional bias: basic and acidic residues; it reads SESKKVTMEKEKKTKEDR.

Belongs to the adaptor complexes large subunit family. Adaptor protein complex 3 (AP-3) is a heterotetramer composed of two large adaptins (delta-type subunit AP3D1 and beta-type subunit AP3B1 or AP3B2), a medium adaptin (mu-type subunit AP3M1 or AP3M2) and a small adaptin (sigma-type subunit APS1 or AP3S2). AP-3 associates with the BLOC-1 complex. Interacts with KIF3A; interaction is direct; interaction is impaired by pyrophosphorylation of AP3B1. In terms of processing, phosphorylated on serine residues. Pyrophosphorylation by 5-diphosphoinositol pentakisphosphate (5-IP7) impairs interaction with KIF3A. Serine pyrophosphorylation is achieved by Mg(2+)-dependent, but enzyme independent transfer of a beta-phosphate from a inositol pyrophosphate to a pre-phosphorylated serine residue.

Its subcellular location is the cytoplasmic vesicle. It localises to the clathrin-coated vesicle membrane. The protein resides in the golgi apparatus. Its function is as follows. Subunit of non-clathrin- and clathrin-associated adaptor protein complex 3 (AP-3) that plays a role in protein sorting in the late-Golgi/trans-Golgi network (TGN) and/or endosomes. The AP complexes mediate both the recruitment of clathrin to membranes and the recognition of sorting signals within the cytosolic tails of transmembrane cargo molecules. AP-3 appears to be involved in the sorting of a subset of transmembrane proteins targeted to lysosomes and lysosome-related organelles. In concert with the BLOC-1 complex, AP-3 is required to target cargos into vesicles assembled at cell bodies for delivery into neurites and nerve terminals. The polypeptide is AP-3 complex subunit beta-1 (AP3B1) (Canis lupus familiaris (Dog)).